The primary structure comprises 307 residues: MFEHIPVLLEESVSFLITNPDGIYVDATFGLGGHSKRILEKISNKGFLIAIDRDLEAIELGKRKLEAYKNVKIVHSSFSKVDELLECLGIEKIDGILFDFGVSSLQLDKQERGFSYNKEAFLDMRMDTTSKLTAYDVVNFYSQEDLEKIIREYGEERFARRIAKAIVERRSKKPIETTTELSSLISSLVPRPKDGSHPAQRTFQAIRIEVNGELDEIKIALEKSLRFLRSGGRICAISFHSLEDRIVKEFFKFHSLECVCPKDIPVCRCGKKKELNIITKKPITPSKEEIESNKRSHSAKLRVAEKV.

Residues 32-34 (GGH), Asp-52, Phe-78, Asp-99, and Gln-106 contribute to the S-adenosyl-L-methionine site. Residues 287–307 (KEEIESNKRSHSAKLRVAEKV) form a disordered region.

It belongs to the methyltransferase superfamily. RsmH family.

It is found in the cytoplasm. The catalysed reaction is cytidine(1402) in 16S rRNA + S-adenosyl-L-methionine = N(4)-methylcytidine(1402) in 16S rRNA + S-adenosyl-L-homocysteine + H(+). In terms of biological role, specifically methylates the N4 position of cytidine in position 1402 (C1402) of 16S rRNA. In Caldicellulosiruptor bescii (strain ATCC BAA-1888 / DSM 6725 / KCTC 15123 / Z-1320) (Anaerocellum thermophilum), this protein is Ribosomal RNA small subunit methyltransferase H.